The sequence spans 425 residues: Dihydroorotase (425 aa).

The Zn(2+) site is built by histidine 59 and histidine 61. Residues 61-63 (HLR) and asparagine 93 contribute to the substrate site. Zn(2+)-binding residues include aspartate 151, histidine 178, and histidine 231. Residue asparagine 277 participates in substrate binding. Residue aspartate 304 participates in Zn(2+) binding. Aspartate 304 is an active-site residue. Residues histidine 308 and 322–323 (FG) each bind substrate.

It belongs to the metallo-dependent hydrolases superfamily. DHOase family. Class I DHOase subfamily. The cofactor is Zn(2+).

The catalysed reaction is (S)-dihydroorotate + H2O = N-carbamoyl-L-aspartate + H(+). Its pathway is pyrimidine metabolism; UMP biosynthesis via de novo pathway; (S)-dihydroorotate from bicarbonate: step 3/3. In terms of biological role, catalyzes the reversible cyclization of carbamoyl aspartate to dihydroorotate. The protein is Dihydroorotase of Staphylococcus epidermidis (strain ATCC 35984 / DSM 28319 / BCRC 17069 / CCUG 31568 / BM 3577 / RP62A).